A 555-amino-acid polypeptide reads, in one-letter code: Glutamate--tRNA ligase (555 aa).

The 'HIGH' region motif lies at P100 to H110.

This sequence belongs to the class-I aminoacyl-tRNA synthetase family. Glutamate--tRNA ligase type 2 subfamily.

The protein resides in the cytoplasm. It carries out the reaction tRNA(Glu) + L-glutamate + ATP = L-glutamyl-tRNA(Glu) + AMP + diphosphate. In terms of biological role, catalyzes the attachment of glutamate to tRNA(Glu) in a two-step reaction: glutamate is first activated by ATP to form Glu-AMP and then transferred to the acceptor end of tRNA(Glu). The protein is Glutamate--tRNA ligase of Methanococcus maripaludis (strain C6 / ATCC BAA-1332).